The chain runs to 529 residues: ATP synthase F(1) complex catalytic subunit beta, mitochondrial (529 aa).

Residues 1 to 46 (MLSLVGRVASASASGALRGLSPSAALPQAQLLLRAAPAGVHPARDY) constitute a mitochondrion transit peptide. O-linked (GlcNAc) serine glycosylation occurs at serine 106. N6-acetyllysine; alternate is present on residues lysine 124, lysine 133, and lysine 161. An N6-succinyllysine; alternate mark is found at lysine 124, lysine 133, and lysine 161. Residue lysine 198 is modified to N6-acetyllysine. ADP is bound by residues glycine 209, valine 210, glycine 211, lysine 212, threonine 213, and valine 214. Position 209 (glycine 209) interacts with ATP. Residues glycine 209, valine 210, glycine 211, lysine 212, and threonine 213 each contribute to the phosphate site. ATP is bound by residues glycine 211, lysine 212, threonine 213, and valine 214. Threonine 213 contacts Mg(2+). Position 238 (glutamate 238) interacts with Mg(2+). An ATP-binding site is contributed by arginine 239. An N6-acetyllysine; alternate mark is found at lysine 259 and lysine 264. 2 positions are modified to N6-succinyllysine; alternate: lysine 259 and lysine 264. Position 312 is a phosphothreonine (threonine 312). Residue lysine 426 is modified to N6-acetyllysine. A Phosphoserine modification is found at serine 433. 2 positions are modified to N6-acetyllysine: lysine 480 and lysine 485. An N6-acetyllysine; alternate modification is found at lysine 522. Lysine 522 carries the post-translational modification N6-succinyllysine; alternate. Serine 529 carries the phosphoserine modification.

The protein belongs to the ATPase alpha/beta chains family. Homotrimer. Component of the ATP synthase complex composed at least of ATP5F1A/subunit alpha, ATP5F1B/subunit beta, ATP5MC1/subunit c (homooctomer), MT-ATP6/subunit a, MT-ATP8/subunit 8, ATP5ME/subunit e, ATP5MF/subunit f, ATP5MG/subunit g, ATP5MK/subunit k, ATP5MJ/subunit j, ATP5F1C/subunit gamma, ATP5F1D/subunit delta, ATP5F1E/subunit epsilon, ATP5PF/subunit F6, ATP5PB/subunit b, ATP5PD/subunit d, ATP5PO/subunit OSCP. ATP synthase complex consists of a soluble F(1) head domain (subunits alpha(3) and beta(3)) - the catalytic core - and a membrane F(0) domain - the membrane proton channel (subunits c, a, 8, e, f, g, k and j). These two domains are linked by a central stalk (subunits gamma, delta, and epsilon) rotating inside the F1 region and a stationary peripheral stalk (subunits F6, b, d, and OSCP). Interacts with PPIF. Interacts with BCL2L1 isoform BCL-X(L); the interaction mediates the association of BCL2L1 isoform BCL-X(L) with the mitochondrial membrane F(1)F(0) ATP synthase and enhances neurons metabolic efficiency. Interacts with CLN5 and PPT1. Interacts with S100A1; this interaction increases F1-ATPase activity. Interacts with MTLN. Interacts with TTC5/STRAP; the interaction results in decreased mitochondrial ATP production. Acetylation of Lys-133 is observed in liver mitochondria from fasted mice but not from fed mice.

It is found in the mitochondrion inner membrane. The catalysed reaction is ATP + H2O + 4 H(+)(in) = ADP + phosphate + 5 H(+)(out). Functionally, catalytic subunit beta, of the mitochondrial membrane ATP synthase complex (F(1)F(0) ATP synthase or Complex V) that produces ATP from ADP in the presence of a proton gradient across the membrane which is generated by electron transport complexes of the respiratory chain. ATP synthase complex consist of a soluble F(1) head domain - the catalytic core - and a membrane F(1) domain - the membrane proton channel. These two domains are linked by a central stalk rotating inside the F(1) region and a stationary peripheral stalk. During catalysis, ATP synthesis in the catalytic domain of F(1) is coupled via a rotary mechanism of the central stalk subunits to proton translocation. In vivo, can only synthesize ATP although its ATP hydrolase activity can be activated artificially in vitro. With the subunit alpha (ATP5F1A), forms the catalytic core in the F(1) domain. This is ATP synthase F(1) complex catalytic subunit beta, mitochondrial from Mus musculus (Mouse).